A 342-amino-acid polypeptide reads, in one-letter code: Histidinol-phosphate aminotransferase 2 (342 aa).

An N6-(pyridoxal phosphate)lysine modification is found at Lys206.

The protein belongs to the class-II pyridoxal-phosphate-dependent aminotransferase family. Histidinol-phosphate aminotransferase subfamily. The cofactor is pyridoxal 5'-phosphate.

It carries out the reaction L-histidinol phosphate + 2-oxoglutarate = 3-(imidazol-4-yl)-2-oxopropyl phosphate + L-glutamate. Its pathway is amino-acid biosynthesis; L-histidine biosynthesis; L-histidine from 5-phospho-alpha-D-ribose 1-diphosphate: step 7/9. This chain is Histidinol-phosphate aminotransferase 2 (hisC2), found in Archaeoglobus fulgidus (strain ATCC 49558 / DSM 4304 / JCM 9628 / NBRC 100126 / VC-16).